The primary structure comprises 242 residues: Lactate utilization protein A 2 (242 aa).

The protein belongs to the LutA/YkgE family.

Functionally, is involved in L-lactate degradation and allows cells to grow with lactate as the sole carbon source. In Bacillus cereus (strain ZK / E33L), this protein is Lactate utilization protein A 2.